The sequence spans 197 residues: Isopentenyl-diphosphate Delta-isomerase (197 aa).

Residues His41 and His48 each coordinate Mn(2+). The 138-residue stretch at Gln46–Ala183 folds into the Nudix hydrolase domain. Residue Cys83 is part of the active site. Cys83 is a Mg(2+) binding site. Residue His85 coordinates Mn(2+). Residue Glu103 coordinates Mg(2+). Mn(2+) is bound by residues Glu130 and Glu132. Glu132 is a catalytic residue.

Belongs to the IPP isomerase type 1 family. Mg(2+) is required as a cofactor. It depends on Mn(2+) as a cofactor.

The protein localises to the cytoplasm. It catalyses the reaction isopentenyl diphosphate = dimethylallyl diphosphate. It functions in the pathway isoprenoid biosynthesis; dimethylallyl diphosphate biosynthesis; dimethylallyl diphosphate from isopentenyl diphosphate: step 1/1. Catalyzes the 1,3-allylic rearrangement of the homoallylic substrate isopentenyl (IPP) to its highly electrophilic allylic isomer, dimethylallyl diphosphate (DMAPP). The chain is Isopentenyl-diphosphate Delta-isomerase from Streptomyces avermitilis (strain ATCC 31267 / DSM 46492 / JCM 5070 / NBRC 14893 / NCIMB 12804 / NRRL 8165 / MA-4680).